Reading from the N-terminus, the 119-residue chain is Large ribosomal subunit protein bL20c (119 aa).

Belongs to the bacterial ribosomal protein bL20 family.

It localises to the plastid. It is found in the chloroplast. Its function is as follows. Binds directly to 23S ribosomal RNA and is necessary for the in vitro assembly process of the 50S ribosomal subunit. It is not involved in the protein synthesizing functions of that subunit. The protein is Large ribosomal subunit protein bL20c of Amborella trichopoda.